A 684-amino-acid chain; its full sequence is DNA ligase (684 aa).

NAD(+) contacts are provided by residues 34-38 (DYDFD), 83-84 (SL), and Glu117. The active-site N6-AMP-lysine intermediate is Lys119. Residues Arg140, Glu188, Lys301, and Lys325 each contribute to the NAD(+) site. The Zn(2+) site is built by Cys419, Cys422, Cys437, and Cys443. The BRCT domain occupies 602–684 (DAPQTFAGMT…QTMLAAESGD (83 aa)).

This sequence belongs to the NAD-dependent DNA ligase family. LigA subfamily. It depends on Mg(2+) as a cofactor. Requires Mn(2+) as cofactor.

The catalysed reaction is NAD(+) + (deoxyribonucleotide)n-3'-hydroxyl + 5'-phospho-(deoxyribonucleotide)m = (deoxyribonucleotide)n+m + AMP + beta-nicotinamide D-nucleotide.. Functionally, DNA ligase that catalyzes the formation of phosphodiester linkages between 5'-phosphoryl and 3'-hydroxyl groups in double-stranded DNA using NAD as a coenzyme and as the energy source for the reaction. It is essential for DNA replication and repair of damaged DNA. In Chloroherpeton thalassium (strain ATCC 35110 / GB-78), this protein is DNA ligase.